A 160-amino-acid chain; its full sequence is Cytochrome c-type biogenesis protein CcmE (160 aa).

The Cytoplasmic portion of the chain corresponds to 1–8; it reads MNPRRKNR. Residues 9–29 form a helical; Signal-anchor for type II membrane protein membrane-spanning segment; that stretch reads LILVMLVLVGLGLATALVMYA. Over 30-160 the chain is Periplasmic; that stretch reads LRSNIDLFYT…AVGDNSVRPS (131 aa). Residues histidine 130 and tyrosine 134 each contribute to the heme site. Over residues 133–148 the composition is skewed to basic and acidic residues; sequence KYTPPEIEDAMKKDHP. The tract at residues 133 to 160 is disordered; it reads KYTPPEIEDAMKKDHPAQAVGDNSVRPS.

It belongs to the CcmE/CycJ family.

The protein localises to the cell inner membrane. Functionally, heme chaperone required for the biogenesis of c-type cytochromes. Transiently binds heme delivered by CcmC and transfers the heme to apo-cytochromes in a process facilitated by CcmF and CcmH. The protein is Cytochrome c-type biogenesis protein CcmE of Erwinia tasmaniensis (strain DSM 17950 / CFBP 7177 / CIP 109463 / NCPPB 4357 / Et1/99).